The chain runs to 1464 residues: Bridge-like lipid transfer protein family member 3B (1464 aa).

A Chorein N-terminal domain is found at 3-94 (GIIKKQILKH…DKVIMEMSTC (92 aa)). Disordered stretches follow at residues 267–297 (STEQ…TQTS) and 409–436 (DHNV…YPLK). A compositionally biased stretch (polar residues) spans 278-297 (PTQSSTVVASAQQVKTTQTS). A phosphoserine mark is found at Ser-414, Ser-418, Ser-774, Ser-935, and Ser-1009. Disordered stretches follow at residues 1066–1089 (SKEE…PKER), 1164–1183 (LQNY…EGAQ), and 1392–1413 (QRSV…QSAN). 2 stretches are compositionally biased toward polar residues: residues 1164–1182 (LQNY…SEGA) and 1394–1413 (SVTQ…QSAN). A coiled-coil region spans residues 1418-1456 (SFDFTREQLMEENESLKQELAKAKMALAEAHLEKDALLH).

Monomer. Homodimer (via N-terminus). Associates with the Golgi-associated retrograde protein (GARP) complex. Interacts with GARP complex component VPS52. Interacts (via C-terminal coiled-coil domain) with STX6.

Its subcellular location is the cytoplasm. The protein localises to the cytosol. It is found in the early endosome. Its function is as follows. Tube-forming lipid transport protein which mediates the transfer of lipids between membranes at organelle contact sites. Required for retrograde traffic of vesicle clusters in the early endocytic pathway to the Golgi complex. The chain is Bridge-like lipid transfer protein family member 3B from Homo sapiens (Human).